The sequence spans 121 residues: Iron-sulfur cluster assembly protein CyaY (121 aa).

This sequence belongs to the frataxin family.

In terms of biological role, involved in iron-sulfur (Fe-S) cluster assembly. May act as a regulator of Fe-S biogenesis. This Buchnera aphidicola subsp. Schizaphis graminum (strain Sg) protein is Iron-sulfur cluster assembly protein CyaY.